The following is a 204-amino-acid chain: Cytochrome c biogenesis ATP-binding export protein CcmA (204 aa).

The ABC transporter domain maps to 3–204; the sequence is LTVTDLAIAR…PLDDPDGDFL (202 aa). Residue 35–42 coordinates ATP; sequence GPNGAGKT.

It belongs to the ABC transporter superfamily. CcmA exporter (TC 3.A.1.107) family. The complex is composed of two ATP-binding proteins (CcmA) and two transmembrane proteins (CcmB).

It is found in the cell membrane. It catalyses the reaction heme b(in) + ATP + H2O = heme b(out) + ADP + phosphate + H(+). Part of the ABC transporter complex CcmAB involved in the biogenesis of c-type cytochromes; once thought to export heme, this seems not to be the case, but its exact role is uncertain. Responsible for energy coupling to the transport system. This is Cytochrome c biogenesis ATP-binding export protein CcmA from Ruegeria pomeroyi (strain ATCC 700808 / DSM 15171 / DSS-3) (Silicibacter pomeroyi).